We begin with the raw amino-acid sequence, 533 residues long: Peptide chain release factor 3 (533 aa).

Residues 9 to 284 (ARRRTFAIIS…ALCELSPPPL (276 aa)) form the tr-type G domain. GTP-binding positions include 18-25 (SHPDAGKT), 95-99 (DTPGH), and 149-152 (NKLD).

This sequence belongs to the TRAFAC class translation factor GTPase superfamily. Classic translation factor GTPase family. PrfC subfamily.

It is found in the cytoplasm. Increases the formation of ribosomal termination complexes and stimulates activities of RF-1 and RF-2. It binds guanine nucleotides and has strong preference for UGA stop codons. It may interact directly with the ribosome. The stimulation of RF-1 and RF-2 is significantly reduced by GTP and GDP, but not by GMP. The polypeptide is Peptide chain release factor 3 (Cupriavidus necator (strain ATCC 17699 / DSM 428 / KCTC 22496 / NCIMB 10442 / H16 / Stanier 337) (Ralstonia eutropha)).